Here is a 304-residue protein sequence, read N- to C-terminus: tRNA pseudouridine synthase B (304 aa).

Aspartate 38 acts as the Nucleophile in catalysis.

Belongs to the pseudouridine synthase TruB family. Type 1 subfamily.

The catalysed reaction is uridine(55) in tRNA = pseudouridine(55) in tRNA. Its function is as follows. Responsible for synthesis of pseudouridine from uracil-55 in the psi GC loop of transfer RNAs. This is tRNA pseudouridine synthase B from Listeria monocytogenes serotype 4b (strain F2365).